The following is a 220-amino-acid chain: Translation initiation factor 6 (220 aa).

The protein belongs to the eIF-6 family.

In terms of biological role, binds to the 50S ribosomal subunit and prevents its association with the 30S ribosomal subunit to form the 70S initiation complex. The chain is Translation initiation factor 6 from Methanoculleus marisnigri (strain ATCC 35101 / DSM 1498 / JR1).